The primary structure comprises 303 residues: Epimerase family protein YfhF (303 aa).

This sequence belongs to the NAD(P)-dependent epimerase/dehydratase family. SDR39U1 subfamily.

The protein is Epimerase family protein YfhF (yfhF) of Bacillus subtilis (strain 168).